We begin with the raw amino-acid sequence, 1127 residues long: WD repeat and HMG-box DNA-binding protein 1 (1127 aa).

WD repeat units lie at residues 11–50 (GHPE…DPKS), 52–91 (SIGE…GILT), 92–131 (RFTT…QQKT), 134–173 (GHSA…CEAV), 184–223 (FNAK…NICT), 228–267 (FITQ…CLER), and 271–310 (EKGY…DVKQ). Disordered stretches follow at residues 811–1013 (AAEQ…AENK) and 1064–1127 (KAKG…FKKE). Positions 819–829 (QNEEEDEEEED) are enriched in acidic residues. Over residues 846 to 857 (GDSRAKPVKQDQ) the composition is skewed to basic and acidic residues. Over residues 858 to 877 (YEENNEEEMEEEEKEQEEAL) the composition is skewed to acidic residues. Polar residues-rich tracts occupy residues 881–891 (TPTANPFNKSV) and 918–937 (SASQ…TSIL). Positions 948–960 (SASGSPSTSKSDS) are enriched in low complexity. A DNA-binding region (HMG box) is located at residues 1013–1076 (KKPKTGFQLW…GDYPGEDGAD (64 aa)). Over residues 1087–1100 (NMASNGCPQENTDS) the composition is skewed to polar residues.

Homodimer. In terms of tissue distribution, found in oocytes and in various other cells.

It localises to the nucleus. The protein resides in the nucleoplasm. It is found in the cytoplasm. Functionally, core replisome component that acts as a replication initiation factor. Binds directly to the CMG complex and functions as a hub to recruit additional proteins to the replication fork. The polypeptide is WD repeat and HMG-box DNA-binding protein 1 (wdhd1) (Xenopus laevis (African clawed frog)).